Reading from the N-terminus, the 494-residue chain is ATP synthase subunit beta, plastid (494 aa).

Residue 169–176 participates in ATP binding; sequence GGAGVGKT.

The protein belongs to the ATPase alpha/beta chains family. In terms of assembly, F-type ATPases have 2 components, CF(1) - the catalytic core - and CF(0) - the membrane proton channel. CF(1) has five subunits: alpha(3), beta(3), gamma(1), delta(1), epsilon(1). CF(0) has four main subunits: a(1), b(1), b'(1) and c(9-12).

The protein localises to the plastid thylakoid membrane. The catalysed reaction is ATP + H2O + 4 H(+)(in) = ADP + phosphate + 5 H(+)(out). Its function is as follows. Produces ATP from ADP in the presence of a proton gradient across the membrane. The catalytic sites are hosted primarily by the beta subunits. This Cuscuta gronovii (Common dodder) protein is ATP synthase subunit beta, plastid (atpB).